The following is a 259-amino-acid chain: MNLLQKTRKINAMLQKAAGKPVNFKEMAETLCEVIEANVFVVSRRGKLLGFAIKQSIENERMKRMLEERQFPEEYTKKLFNITETSPNIDINSEYTAFPVENRDLFKTGLTTIVPINGGGERLGTLILSRLDREFNDDDLILAEYGATVVGMEILREKAEEIEEEARSKAVVQMAISSLSYSELEAIEHIFEELEGTEGLLVASKIADRVGITRSVIVNALRKLESAGVIESRSLGMKGTYIKVLNDKFLTELEKLKSS.

Residues Met-1–Leu-155 are GAF domain. The H-T-H motif DNA-binding region spans Ala-203–Arg-222. Ser-215 is subject to Phosphoserine.

This sequence belongs to the CodY family.

The protein resides in the cytoplasm. DNA-binding global transcriptional regulator which is involved in the adaptive response to starvation and acts by directly or indirectly controlling the expression of numerous genes in response to nutrient availability. During rapid exponential growth, CodY is highly active and represses genes whose products allow adaptation to nutrient depletion. The protein is Global transcriptional regulator CodY of Geobacillus sp. (strain WCH70).